We begin with the raw amino-acid sequence, 309 residues long: Ribosomal RNA small subunit methyltransferase H (309 aa).

S-adenosyl-L-methionine-binding positions include G34–H36, D54, F80, D102, and Q109.

This sequence belongs to the methyltransferase superfamily. RsmH family.

The protein resides in the cytoplasm. The catalysed reaction is cytidine(1402) in 16S rRNA + S-adenosyl-L-methionine = N(4)-methylcytidine(1402) in 16S rRNA + S-adenosyl-L-homocysteine + H(+). Functionally, specifically methylates the N4 position of cytidine in position 1402 (C1402) of 16S rRNA. The chain is Ribosomal RNA small subunit methyltransferase H from Cellvibrio japonicus (strain Ueda107) (Pseudomonas fluorescens subsp. cellulosa).